Consider the following 117-residue polypeptide: Protein Wnt-6 (117 aa).

Ser1 carries the O-palmitoleoyl serine; by PORCN lipid modification. Cys83 and Cys98 are oxidised to a cystine. N-linked (GlcNAc...) asparagine glycosylation is present at Asn84.

The protein belongs to the Wnt family. Palmitoleoylation is required for efficient binding to frizzled receptors. Depalmitoleoylation leads to Wnt signaling pathway inhibition.

The protein localises to the secreted. Its subcellular location is the extracellular space. It localises to the extracellular matrix. Ligand for members of the frizzled family of seven transmembrane receptors. Probable developmental protein. May be a signaling molecule which affects the development of discrete regions of tissues. Is likely to signal over only few cell diameters. In Plethodon jordani (Red-cheeked salamander), this protein is Protein Wnt-6 (WNT-6).